The following is a 471-amino-acid chain: Protein translocase subunit SecF (471 aa).

The segment at 1–29 (MVSRAKVGAETTKGIDEPDRNDNTDDNGA) is disordered. Residues 13-23 (KGIDEPDRNDN) are compositionally biased toward basic and acidic residues. 6 consecutive transmembrane segments (helical) span residues 88–108 (GGVI…TFGI), 211–231 (ITKK…LYIT), 242–262 (ALTT…LVGF), 267–287 (ATVI…VIVF), 325–345 (LISV…LGVG), and 355–375 (LVGI…LLVT). A disordered region spans residues 393–471 (RRTLGSQVGK…TGKRNNVGRR (79 aa)). Residues 415 to 431 (KPQNQAESCADASSQEG) are compositionally biased toward polar residues. Over residues 448 to 460 (PGVRPVRPTGTRR) the composition is skewed to low complexity. The span at 461 to 471 (PTGKRNNVGRR) shows a compositional bias: basic residues.

It belongs to the SecD/SecF family. SecF subfamily. As to quaternary structure, forms a complex with SecD. Part of the essential Sec protein translocation apparatus which comprises SecA, SecYEG and auxiliary proteins SecDF. Other proteins may also be involved.

It localises to the cell membrane. In terms of biological role, part of the Sec protein translocase complex. Interacts with the SecYEG preprotein conducting channel. SecDF uses the proton motive force (PMF) to complete protein translocation after the ATP-dependent function of SecA. The chain is Protein translocase subunit SecF from Mycobacterium leprae (strain TN).